A 323-amino-acid chain; its full sequence is NADH-ubiquinone oxidoreductase chain 1 (323 aa).

The next 8 membrane-spanning stretches (helical) occupy residues 8 to 28 (VINPLAYIVPVLLAVAFLTLL), 74 to 94 (FLFLATPMLALTLALTLWAPM), 105 to 125 (LGVLFVLALSSLAVYSILGSG), 145 to 165 (ISYEVSLGLILLSVIIITGGF), 176 to 196 (SIWLLVPAWPLAAMWYISTLA), 236 to 256 (ILLMNTLSAVLFLGASHIPAF), 258 to 278 (ELTALNLMTKAALLSVVFLWV), and 298 to 318 (FLPLTLALVLWHLALPIALAG).

It belongs to the complex I subunit 1 family.

The protein resides in the mitochondrion inner membrane. The enzyme catalyses a ubiquinone + NADH + 5 H(+)(in) = a ubiquinol + NAD(+) + 4 H(+)(out). In terms of biological role, core subunit of the mitochondrial membrane respiratory chain NADH dehydrogenase (Complex I) that is believed to belong to the minimal assembly required for catalysis. Complex I functions in the transfer of electrons from NADH to the respiratory chain. The immediate electron acceptor for the enzyme is believed to be ubiquinone. The polypeptide is NADH-ubiquinone oxidoreductase chain 1 (MT-ND1) (Oncorhynchus mykiss (Rainbow trout)).